We begin with the raw amino-acid sequence, 422 residues long: Histidine--tRNA ligase (422 aa).

Belongs to the class-II aminoacyl-tRNA synthetase family. Homodimer.

It is found in the cytoplasm. The catalysed reaction is tRNA(His) + L-histidine + ATP = L-histidyl-tRNA(His) + AMP + diphosphate + H(+). The polypeptide is Histidine--tRNA ligase (Nocardia farcinica (strain IFM 10152)).